The chain runs to 344 residues: MNATNLQLISHAQKIDHVFKIIGYIVNPLGILFNTLLIILISTKTPKLLQSYSMLHLNFALCDLFSCLAGMLALQKIVFSGWSLTYIFHGACGQISSYFCYFLHVFVCHCLAHSQWILMISFLYRYYILDQISPDTVKIVRICILTYLPSLLFVIVYWSDVANEDALKRIVNSFHPEYIYDSKEIWGDLVIAGNMSCWSAATFSAIVYMTIPCFPIYGVIVFFRHKTLKSLDGRGRITMSETTRSSHKQLIKALTIQAIVPIFWLTASTFYLLALFQVVGRVIVENMPFRIMECMPMITPLISLYFVRPYRSALTGWFFPTSLLKPVIASAMLSSTAASVAPTP.

Helical transmembrane passes span 21–41 (IIGY…IILI), 54–74 (MLHL…MLAL), 102–122 (FLHV…MISF), 142–162 (ICIL…SDVA), 203–223 (FSAI…IVFF), 259–279 (IVPI…FQVV), and 287–307 (MPFR…LYFV).

Belongs to the nematode receptor-like protein srd family.

It localises to the membrane. This chain is Serpentine receptor class delta-3 (srd-3), found in Caenorhabditis elegans.